A 171-amino-acid polypeptide reads, in one-letter code: Ribosome maturation factor RimM (171 aa).

The 75-residue stretch at alanine 96–leucine 170 folds into the PRC barrel domain.

Belongs to the RimM family. In terms of assembly, binds ribosomal protein uS19.

The protein localises to the cytoplasm. In terms of biological role, an accessory protein needed during the final step in the assembly of 30S ribosomal subunit, possibly for assembly of the head region. Essential for efficient processing of 16S rRNA. May be needed both before and after RbfA during the maturation of 16S rRNA. It has affinity for free ribosomal 30S subunits but not for 70S ribosomes. The sequence is that of Ribosome maturation factor RimM from Bacillus anthracis (strain A0248).